A 204-amino-acid chain; its full sequence is UPF0056 membrane protein TC_0241 (204 aa).

Helical transmembrane passes span 8–28, 46–66, 68–88, 107–127, 138–158, and 176–196; these read LTLL…FVAL, IFAL…FRLL, VSLP…AINM, IFYP…STLG, LVLG…FFSS, and FGIS…STAF.

This sequence belongs to the UPF0056 (MarC) family.

The protein localises to the cell membrane. The protein is UPF0056 membrane protein TC_0241 of Chlamydia muridarum (strain MoPn / Nigg).